The primary structure comprises 293 residues: Shikimate kinase (293 aa).

Residue 87–97 participates in ATP binding; the sequence is PLAGGLKSSSA.

The protein belongs to the GHMP kinase family. Archaeal shikimate kinase subfamily.

The protein localises to the cytoplasm. The enzyme catalyses shikimate + ATP = 3-phosphoshikimate + ADP + H(+). Its pathway is metabolic intermediate biosynthesis; chorismate biosynthesis; chorismate from D-erythrose 4-phosphate and phosphoenolpyruvate: step 5/7. The polypeptide is Shikimate kinase (Methanosarcina mazei (strain ATCC BAA-159 / DSM 3647 / Goe1 / Go1 / JCM 11833 / OCM 88) (Methanosarcina frisia)).